A 29-amino-acid chain; its full sequence is Beta-theraphotoxin-Gr1a (29 aa).

3 disulfide bridges follow: Cys2-Cys16, Cys9-Cys21, and Cys15-Cys25.

It belongs to the neurotoxin 30 (phrixotoxin) family. As to expression, expressed by the venom gland.

It is found in the secreted. In terms of biological role, inhibits voltage-gated sodium channels Nav1.1/SCN1A (IC(50)=630 nM), Nav1.2/SCN2A (IC(50)=230 nM), Nav1.3/SCN3A (IC(50)=770 nM), Nav1.4/SCN4A (IC(50)=1290 nM), Nav1.6/SCN8A (IC(50)=630 nM), Nav1.7/SCN9A (IC(50)=15.3-1000 nM) and potassium channels Kv11.1/KCNH2 (IC(50)=4.2 uM). The protein is Beta-theraphotoxin-Gr1a of Grammostola rosea (Chilean rose tarantula).